We begin with the raw amino-acid sequence, 372 residues long: 12-oxophytodienoate reductase 1 (372 aa).

An N-acetylmethionine modification is found at methionine 1. Residues 31-33 (PLT), alanine 64, and glutamine 106 contribute to the FMN site. A substrate-binding site is contributed by histidine 183. The Proton donor role is filled by tyrosine 188. Arginine 235 contributes to the FMN binding site. Arginine 275 contributes to the substrate binding site. FMN is bound by residues 303 to 305 (AGG) and 326 to 327 (GR).

It belongs to the NADH:flavin oxidoreductase/NADH oxidase family. The cofactor is FMN. As to expression, mostly expressed in roots, also present in leaves, shoots and flowers. More abundant in cotyledons. In more details, expressed in peduncles, sepals, petals, around the abscission zone of siliques, maturing siliques and developing seeds.

The protein resides in the cytoplasm. It catalyses the reaction (1S,2S)-OPC-8 + NADP(+) = (9S,13S,15Z)-12-oxophyto-10,15-dienoate + NADPH + H(+). It functions in the pathway lipid metabolism; oxylipin biosynthesis. Specifically cleaves olefinic bonds in alpha,beta-unsaturated carbonyls and may be involved in detoxification or modification of these reactive compounds. May be involved in the biosynthesis or metabolism of oxylipin signaling molecules. In vitro, reduces 9R,13R-12-oxophytodienoic acid (9R,13R-OPDA) to 9R,13R-OPC-8:0, but only poorly 9S,13S-OPDA, the natural precursor of jasmonic acid. Can detoxify the explosive 2,4,6-trinitrotoluene (TNT) in vitro and in vivo by catalyzing its nitroreduction to form hydroxylamino-dinitrotoluene (HADNT). The protein is 12-oxophytodienoate reductase 1 of Arabidopsis thaliana (Mouse-ear cress).